Consider the following 417-residue polypeptide: MKAVVLGSGVVGLMSAWYLQKAGYQVTVVDRQARSAEETSFANAGQISYGYSSPWAAPGIPQKALRWLMEEHAPLKIKPSLDPQLLKWATQMLANCQLSRYQVNKARMLAIANHSRECLSQLRQEHDIEYQGRQQGTLQVFRTQKQLIAIEKDIALLEQSGTRYQRMSVDECIKQEPGLAAVSHKLTGGLYLPDDETGDCYLFCQQMTELAQQQGVTFLFNTNVKKVNTQGNQVVSVSTDAGELQADVYVVAMGSYSTALLAKLGITIPVYPVKGYSLTVPITDESQAPVSTVMDETYKVALTRFDDRIRVAGTAELAGFDPAIPEKRKATISMVVNDLFPHSGDFAKAEFWTGFRPMTPDGTPLIGKTPLKNLYTNTGHGTLGWTMACGSGHLLSQIITGEQSENPAGLDLFRYAS.

FAD is bound at residue 3-17 (AVVLGSGVVGLMSAW).

Belongs to the DadA oxidoreductase family. The cofactor is FAD.

The catalysed reaction is a D-alpha-amino acid + A + H2O = a 2-oxocarboxylate + AH2 + NH4(+). Its function is as follows. Oxidative deamination of D-amino acids. The chain is D-amino acid dehydrogenase from Vibrio vulnificus (strain CMCP6).